Reading from the N-terminus, the 384-residue chain is Bifunctional enzyme IspD/IspF (384 aa).

Residues 1-226 (MAKTVVLVVA…RCLFDGPGEV (226 aa)) are 2-C-methyl-D-erythritol 4-phosphate cytidylyltransferase. Residues 227–384 (RSASGYDVHR…QAMASVWLPR (158 aa)) form a 2-C-methyl-D-erythritol 2,4-cyclodiphosphate synthase region. 2 residues coordinate a divalent metal cation: Asp-233 and His-235. 4-CDP-2-C-methyl-D-erythritol 2-phosphate is bound by residues 233-235 (DVH) and 260-261 (HS). His-268 contributes to the a divalent metal cation binding site. 4-CDP-2-C-methyl-D-erythritol 2-phosphate contacts are provided by residues 282–284 (DIG), 358–361 (TTTE), Phe-365, and Arg-368.

The protein in the N-terminal section; belongs to the IspD/TarI cytidylyltransferase family. IspD subfamily. This sequence in the C-terminal section; belongs to the IspF family. Requires a divalent metal cation as cofactor.

It catalyses the reaction 2-C-methyl-D-erythritol 4-phosphate + CTP + H(+) = 4-CDP-2-C-methyl-D-erythritol + diphosphate. The enzyme catalyses 4-CDP-2-C-methyl-D-erythritol 2-phosphate = 2-C-methyl-D-erythritol 2,4-cyclic diphosphate + CMP. It participates in isoprenoid biosynthesis; isopentenyl diphosphate biosynthesis via DXP pathway; isopentenyl diphosphate from 1-deoxy-D-xylulose 5-phosphate: step 2/6. The protein operates within isoprenoid biosynthesis; isopentenyl diphosphate biosynthesis via DXP pathway; isopentenyl diphosphate from 1-deoxy-D-xylulose 5-phosphate: step 4/6. Its function is as follows. Bifunctional enzyme that catalyzes the formation of 4-diphosphocytidyl-2-C-methyl-D-erythritol from CTP and 2-C-methyl-D-erythritol 4-phosphate (MEP) (IspD), and catalyzes the conversion of 4-diphosphocytidyl-2-C-methyl-D-erythritol 2-phosphate (CDP-ME2P) to 2-C-methyl-D-erythritol 2,4-cyclodiphosphate (ME-CPP) with a corresponding release of cytidine 5-monophosphate (CMP) (IspF). The protein is Bifunctional enzyme IspD/IspF of Paramagnetospirillum magneticum (strain ATCC 700264 / AMB-1) (Magnetospirillum magneticum).